A 543-amino-acid polypeptide reads, in one-letter code: CTP synthase (543 aa).

An amidoligase domain region spans residues 1–266 (MKTNYIFVTG…DDYICERFSL (266 aa)). A CTP-binding site is contributed by Ser14. Ser14 lines the UTP pocket. Residues 15-20 (SLGKGI) and Asp72 each bind ATP. Residues Asp72 and Glu140 each coordinate Mg(2+). CTP contacts are provided by residues 147–149 (DIE), 187–192 (KTKPTQ), and Lys223. UTP-binding positions include 187 to 192 (KTKPTQ) and Lys223. ATP is bound at residue 239–241 (KDV). Positions 291–538 (TVGIVGKYID…IKAASEYQKK (248 aa)) constitute a Glutamine amidotransferase type-1 domain. Residue Gly352 coordinates L-glutamine. The Nucleophile; for glutamine hydrolysis role is filled by Cys379. Residues 380-383 (LGMQ), Glu403, and Arg466 each bind L-glutamine. Residues His511 and Glu513 contribute to the active site.

The protein belongs to the CTP synthase family. In terms of assembly, homotetramer.

The enzyme catalyses UTP + L-glutamine + ATP + H2O = CTP + L-glutamate + ADP + phosphate + 2 H(+). It carries out the reaction L-glutamine + H2O = L-glutamate + NH4(+). It catalyses the reaction UTP + NH4(+) + ATP = CTP + ADP + phosphate + 2 H(+). Its pathway is pyrimidine metabolism; CTP biosynthesis via de novo pathway; CTP from UDP: step 2/2. Allosterically activated by GTP, when glutamine is the substrate; GTP has no effect on the reaction when ammonia is the substrate. The allosteric effector GTP functions by stabilizing the protein conformation that binds the tetrahedral intermediate(s) formed during glutamine hydrolysis. Inhibited by the product CTP, via allosteric rather than competitive inhibition. Functionally, catalyzes the ATP-dependent amination of UTP to CTP with either L-glutamine or ammonia as the source of nitrogen. Regulates intracellular CTP levels through interactions with the four ribonucleotide triphosphates. The protein is CTP synthase of Baumannia cicadellinicola subsp. Homalodisca coagulata.